Reading from the N-terminus, the 214-residue chain is Adenylate kinase (214 aa).

Residue 14-19 coordinates ATP; that stretch reads GSGKGT. The tract at residues 32–61 is NMP; that stretch reads SVGKVLRTVMESNTAEADVVKKFIKSGKLV. AMP contacts are provided by residues arginine 38, 59 to 61, 87 to 90, and glutamine 94; these read KLV and GYPR. An LID region spans residues 124 to 162; sequence GRISCTDCGTIYNKLYCMPKINGVCDICNSSSFQNRVDD. Arginine 125 provides a ligand contact to ATP. Cysteine 128 and cysteine 131 together coordinate Zn(2+). 134 to 135 is an ATP binding site; it reads IY. The Zn(2+) site is built by cysteine 148 and cysteine 151. 2 residues coordinate AMP: arginine 159 and arginine 170. ATP is bound at residue glutamine 198.

Belongs to the adenylate kinase family. As to quaternary structure, monomer.

The protein localises to the cytoplasm. The catalysed reaction is AMP + ATP = 2 ADP. Its pathway is purine metabolism; AMP biosynthesis via salvage pathway; AMP from ADP: step 1/1. Catalyzes the reversible transfer of the terminal phosphate group between ATP and AMP. Plays an important role in cellular energy homeostasis and in adenine nucleotide metabolism. The polypeptide is Adenylate kinase (Orientia tsutsugamushi (strain Ikeda) (Rickettsia tsutsugamushi)).